A 145-amino-acid polypeptide reads, in one-letter code: 3-hydroxyacyl-[acyl-carrier-protein] dehydratase FabZ (145 aa).

His-49 is an active-site residue.

It belongs to the thioester dehydratase family. FabZ subfamily.

It is found in the cytoplasm. It catalyses the reaction a (3R)-hydroxyacyl-[ACP] = a (2E)-enoyl-[ACP] + H2O. Functionally, involved in unsaturated fatty acids biosynthesis. Catalyzes the dehydration of short chain beta-hydroxyacyl-ACPs and long chain saturated and unsaturated beta-hydroxyacyl-ACPs. The sequence is that of 3-hydroxyacyl-[acyl-carrier-protein] dehydratase FabZ from Ehrlichia ruminantium (strain Welgevonden).